The following is a 191-amino-acid chain: Peptidyl-tRNA hydrolase (191 aa).

Residue Y16 participates in tRNA binding. H21 serves as the catalytic Proton acceptor. 3 residues coordinate tRNA: Y67, N69, and N115.

This sequence belongs to the PTH family. In terms of assembly, monomer.

The protein localises to the cytoplasm. It carries out the reaction an N-acyl-L-alpha-aminoacyl-tRNA + H2O = an N-acyl-L-amino acid + a tRNA + H(+). Functionally, hydrolyzes ribosome-free peptidyl-tRNAs (with 1 or more amino acids incorporated), which drop off the ribosome during protein synthesis, or as a result of ribosome stalling. In terms of biological role, catalyzes the release of premature peptidyl moieties from peptidyl-tRNA molecules trapped in stalled 50S ribosomal subunits, and thus maintains levels of free tRNAs and 50S ribosomes. This Wigglesworthia glossinidia brevipalpis protein is Peptidyl-tRNA hydrolase.